A 426-amino-acid chain; its full sequence is L-ascorbate peroxidase T, chloroplastic (426 aa).

Catalysis depends on H112, which acts as the Proton acceptor. Residue H241 participates in heme b binding. K(+) is bound at residue T242. The tract at residues 245–269 (RARPDRSGWGKPETKYTKTGPGEAG) is disordered. Residues 246-260 (ARPDRSGWGKPETKY) show a composition bias toward basic and acidic residues. 2 residues coordinate K(+): T274 and D281. The helical transmembrane segment at 397-417 (YFLNIIIAIGVLVLLSTLFGG) threads the bilayer.

It belongs to the peroxidase family. Ascorbate peroxidase subfamily. Requires heme b as cofactor.

Its subcellular location is the plastid. The protein resides in the chloroplast thylakoid membrane. It catalyses the reaction L-ascorbate + H2O2 = L-dehydroascorbate + 2 H2O. Functionally, plays a key role in hydrogen peroxide removal. The chain is L-ascorbate peroxidase T, chloroplastic (APXT) from Arabidopsis thaliana (Mouse-ear cress).